Consider the following 1005-residue polypeptide: Espin-like protein (1005 aa).

9 ANK repeats span residues 1–31 (MEKQRALVAAKDGDVATLERLLEAGALGPGI), 35–64 (LGAGLVHHATRAGHLDCVKFLVQRAQLPGN), 69–99 (NGATPAHDAAATGSLAELCWLVREGGCGLQD), 103–132 (SGVSPLHLAARFGHPVLVEWLLHEGHSATL), 136–166 (EGARPLHHAAVSGDLTCLKLLTAAHGSSVNR), 170–200 (SGASPLYLACQEGHLHLAQFLVKDCGADVHL), 204–234 (DGMSALHAAAARGHYSLVVWLVTFTDIGLTA), 238–267 (EGATALHFAARGGHTPILDRLLLMGTPILR), and 270–299 (WGGTPLHDAAENGQMECCQTLVSHHVDPSL). 2 disordered regions span residues 333–444 (LMTP…ERGQ) and 462–483 (LGAESSAEAQDNGGSSGPTEQA). The segment covering 334–346 (MTPPPPPFPPPPL) has biased composition (pro residues). Over residues 468–480 (AEAQDNGGSSGPT) the composition is skewed to polar residues. The stretch at 517–541 (LQLRRRCQEYESELGRLAAELQALL) forms a coiled coil. Disordered stretches follow at residues 616 to 644 (GDEKPSTRPLQDTCREASASPPRSEAQRQ), 695 to 730 (RSGLASGEPRPGDTEEASDSGISCEEVPSEAGAAAG), and 773 to 795 (LRGQEAARSPGPPSPPSEGPRLG).

Interacts with MYO3A (via C-terminus). Interacts with MYO3B (via C-terminus).

The protein localises to the cell projection. It is found in the stereocilium. Functionally, binds to but does not cross-link actin. Required for the formation and maintenance of inner ear hair cell stereocilia and staircase formation. Essential for normal hearing. In Homo sapiens (Human), this protein is Espin-like protein (ESPNL).